Reading from the N-terminus, the 262-residue chain is Tetratricopeptide repeat protein 33 (262 aa).

3 TPR repeats span residues 59 to 92 (SKQL…TPND), 93 to 126 (ATLY…NPHS), and 127 to 160 (WESW…YPMN). A Phosphoserine modification is found at serine 197. Threonine 251 is subject to Phosphothreonine.

This chain is Tetratricopeptide repeat protein 33 (TTC33), found in Homo sapiens (Human).